We begin with the raw amino-acid sequence, 324 residues long: MADKLTDDQITEYRESFRLFDKNGDGSITKKELGTMMRSIGEKPTKADLQDLMNEADLDGDGTIDFPEFLCVMAKNQGHDQAPRHTKKTMADKLTDDQITEYRESFRLFDKNGDGSITKKELRTVMFSLGKNRTKADLQDMMNEVDLDGDGTIDFPEFLYLMAKNQGHDQAPRHTKKTMVDYQLTDDQILEFREAFRVFDKNGDGYITVNELRTTMRSLGETQTKAELQDMINEADADGDGTISFSEFVCVMTGKMIDTQSKKETYRVVNQGQGQVQRHTRNDRAGGTNWERDIAVGVASNIIASPISDFMKDRFKDLFEALLS.

EF-hand domains follow at residues 8–43 (DQIT…IGEK), 44–79 (PTKA…NQGH), 97–132 (DQIT…LGKN), 133–168 (RTKA…NQGH), 187–222 (DQIL…LGET), and 223–258 (QTKA…KMID). 30 residues coordinate Ca(2+): D21, N23, D25, S27, E32, D57, D59, D61, T63, E68, D110, N112, D114, S116, E121, D146, D148, D150, T152, E157, D200, N202, D204, Y206, E211, D236, D238, D240, T242, and E247.

The protein belongs to the calmodulin family. As to quaternary structure, interacts with PID. Binds to ABCG36.

Its function is as follows. Potential calcium sensor that binds calcium in vitro. In Arabidopsis thaliana (Mouse-ear cress), this protein is Calmodulin-like protein 12.